Consider the following 687-residue polypeptide: Glycine--tRNA ligase beta subunit (687 aa).

The protein belongs to the class-II aminoacyl-tRNA synthetase family. As to quaternary structure, tetramer of two alpha and two beta subunits.

Its subcellular location is the cytoplasm. It catalyses the reaction tRNA(Gly) + glycine + ATP = glycyl-tRNA(Gly) + AMP + diphosphate. The protein is Glycine--tRNA ligase beta subunit of Neisseria meningitidis serogroup A / serotype 4A (strain DSM 15465 / Z2491).